Consider the following 366-residue polypeptide: Chorismate synthase (366 aa).

2 residues coordinate NADP(+): Arg-48 and Arg-54. Residues 125–127 (RSS), 238–239 (NA), Gly-278, 293–297 (KPTSS), and Arg-319 each bind FMN.

It belongs to the chorismate synthase family. In terms of assembly, homotetramer. The cofactor is FMNH2.

The enzyme catalyses 5-O-(1-carboxyvinyl)-3-phosphoshikimate = chorismate + phosphate. It functions in the pathway metabolic intermediate biosynthesis; chorismate biosynthesis; chorismate from D-erythrose 4-phosphate and phosphoenolpyruvate: step 7/7. Catalyzes the anti-1,4-elimination of the C-3 phosphate and the C-6 proR hydrogen from 5-enolpyruvylshikimate-3-phosphate (EPSP) to yield chorismate, which is the branch point compound that serves as the starting substrate for the three terminal pathways of aromatic amino acid biosynthesis. This reaction introduces a second double bond into the aromatic ring system. In Neisseria meningitidis serogroup B (strain ATCC BAA-335 / MC58), this protein is Chorismate synthase.